The sequence spans 119 residues: Large ribosomal subunit protein bL20 (119 aa).

Belongs to the bacterial ribosomal protein bL20 family.

Binds directly to 23S ribosomal RNA and is necessary for the in vitro assembly process of the 50S ribosomal subunit. It is not involved in the protein synthesizing functions of that subunit. In Albidiferax ferrireducens (strain ATCC BAA-621 / DSM 15236 / T118) (Rhodoferax ferrireducens), this protein is Large ribosomal subunit protein bL20.